A 966-amino-acid polypeptide reads, in one-letter code: Alpha-1,4 glucan phosphorylase L-1 isozyme, chloroplastic/amyloplastic (966 aa).

A chloroplast-targeting transit peptide spans 1–50; sequence MATANGAHLFNHYSSNSRFIHFTSRNTSSKLFLTKTSHFRRPKRCFHVNN. Position 812 is an N6-(pyridoxal phosphate)lysine (lysine 812).

Belongs to the glycogen phosphorylase family. Pyridoxal 5'-phosphate is required as a cofactor. In terms of tissue distribution, tuber.

It is found in the plastid. The protein resides in the chloroplast. It localises to the amyloplast. It carries out the reaction [(1-&gt;4)-alpha-D-glucosyl](n) + phosphate = [(1-&gt;4)-alpha-D-glucosyl](n-1) + alpha-D-glucose 1-phosphate. Its function is as follows. Phosphorylase is an important allosteric enzyme in carbohydrate metabolism. Enzymes from different sources differ in their regulatory mechanisms and in their natural substrates. However, all known phosphorylases share catalytic and structural properties. The chain is Alpha-1,4 glucan phosphorylase L-1 isozyme, chloroplastic/amyloplastic from Solanum tuberosum (Potato).